The primary structure comprises 1097 residues: DNA-directed RNA polymerase subunit beta (1097 aa).

The tract at residues 1072 to 1097 is disordered; it reads QDINPRRNTPSRPTYESLGTSEYEED. Polar residues predominate over residues 1077-1091; that stretch reads RRNTPSRPTYESLGT.

This sequence belongs to the RNA polymerase beta chain family. In terms of assembly, in cyanobacteria the RNAP catalytic core is composed of 2 alpha, 1 beta, 1 beta', 1 gamma and 1 omega subunit. When a sigma factor is associated with the core the holoenzyme is formed, which can initiate transcription.

It catalyses the reaction RNA(n) + a ribonucleoside 5'-triphosphate = RNA(n+1) + diphosphate. In terms of biological role, DNA-dependent RNA polymerase catalyzes the transcription of DNA into RNA using the four ribonucleoside triphosphates as substrates. The protein is DNA-directed RNA polymerase subunit beta of Prochlorococcus marinus (strain MIT 9301).